The chain runs to 122 residues: Large ribosomal subunit protein uL14c (122 aa).

Belongs to the universal ribosomal protein uL14 family. As to quaternary structure, part of the 50S ribosomal subunit.

It localises to the plastid. The protein localises to the chloroplast. Its function is as follows. Binds to 23S rRNA. The polypeptide is Large ribosomal subunit protein uL14c (Nandina domestica (Heavenly bamboo)).